Reading from the N-terminus, the 251-residue chain is Chorismate mutase (251 aa).

One can recognise a Chorismate mutase domain in the interval 1-251; sequence MSLVNEKLKL…EVDYLLARLL (251 aa). The L-tyrosine site is built by Arg74, Arg75, Asn134, Gly136, and Ser137. The L-tryptophan site is built by Asn134, Gly136, and Ser137.

As to quaternary structure, homodimer.

It is found in the cytoplasm. The enzyme catalyses chorismate = prephenate. It participates in metabolic intermediate biosynthesis; prephenate biosynthesis; prephenate from chorismate: step 1/1. With respect to regulation, each dimer has two allosteric binding sites that can bind the regulatory effectors tryptophan or tyrosine. Can bind either one tryptophan or one tyrosine, two tryptophan or two tyrosine or one tryptophan and one tyrosine, which differentially affect the catalytic activity. Activated by tryptophan and subject to feedback inhibition by tyrosine. In the presence of both tryptophan and tyrosine, the enzyme is in the activated state. Functionally, catalyzes the Claisen rearrangement of chorismate to prephenate. Acts at the first branch point in the aromatic amino acid pathway where it steers biosynthesis towards phenylalanine and tyrosine, and away from tryptophan. The chain is Chorismate mutase from Schizosaccharomyces pombe (strain 972 / ATCC 24843) (Fission yeast).